A 213-amino-acid chain; its full sequence is Protein-L-isoaspartate O-methyltransferase (213 aa).

The active site involves Ser64.

It belongs to the methyltransferase superfamily. L-isoaspartyl/D-aspartyl protein methyltransferase family.

It localises to the cytoplasm. It catalyses the reaction [protein]-L-isoaspartate + S-adenosyl-L-methionine = [protein]-L-isoaspartate alpha-methyl ester + S-adenosyl-L-homocysteine. Its function is as follows. Catalyzes the methyl esterification of L-isoaspartyl residues in peptides and proteins that result from spontaneous decomposition of normal L-aspartyl and L-asparaginyl residues. It plays a role in the repair and/or degradation of damaged proteins. In Flavobacterium johnsoniae (strain ATCC 17061 / DSM 2064 / JCM 8514 / BCRC 14874 / CCUG 350202 / NBRC 14942 / NCIMB 11054 / UW101) (Cytophaga johnsonae), this protein is Protein-L-isoaspartate O-methyltransferase.